A 206-amino-acid polypeptide reads, in one-letter code: Protease (206 aa).

Active-site residues include histidine 55, aspartate 72, and cysteine 122.

Belongs to the peptidase C5 family. Interacts with protease cofactor pVI-C; this interaction is necessary for protease activation.

The protein localises to the virion. It localises to the host nucleus. It carries out the reaction Cleaves proteins of the adenovirus and its host cell at two consensus sites: -Yaa-Xaa-Gly-Gly-|-Xaa- and -Yaa-Xaa-Gly-Xaa-|-Gly- (in which Yaa is Met, Ile or Leu, and Xaa is any amino acid).. With respect to regulation, requires DNA and protease cofactor for maximal activation. Inside nascent virions, becomes partially activated by binding to the viral DNA, allowing it to cleave the cofactor that binds to the protease and fully activates it. Actin, like the viral protease cofactor, seems to act as a cofactor in the cleavage of cytokeratin 18 and of actin itself. Functionally, cleaves viral precursor proteins (pTP, pIIIa, pVI, pVII, pVIII, and pX) inside newly assembled particles giving rise to mature virions. Protease complexed to its cofactor slides along the viral DNA to specifically locate and cleave the viral precursors. Mature virions have a weakened organization compared to the unmature virions, thereby facilitating subsequent uncoating. Without maturation, the particle lacks infectivity and is unable to uncoat. Late in adenovirus infection, in the cytoplasm, may participate in the cytoskeleton destruction. Cleaves host cell cytoskeletal keratins K7 and K18. The chain is Protease from Fowl adenovirus A serotype 1 (strain CELO / Phelps) (FAdV-1).